The sequence spans 425 residues: Enolase (425 aa).

(2R)-2-phosphoglycerate is bound at residue Q162. The active-site Proton donor is the E204. Residues D241, E282, and D309 each coordinate Mg(2+). (2R)-2-phosphoglycerate is bound by residues K334, R363, S364, and K385. K334 functions as the Proton acceptor in the catalytic mechanism.

The protein belongs to the enolase family. It depends on Mg(2+) as a cofactor.

The protein resides in the cytoplasm. Its subcellular location is the secreted. It is found in the cell surface. The catalysed reaction is (2R)-2-phosphoglycerate = phosphoenolpyruvate + H2O. It participates in carbohydrate degradation; glycolysis; pyruvate from D-glyceraldehyde 3-phosphate: step 4/5. In terms of biological role, catalyzes the reversible conversion of 2-phosphoglycerate (2-PG) into phosphoenolpyruvate (PEP). It is essential for the degradation of carbohydrates via glycolysis. In Micrococcus luteus (strain ATCC 4698 / DSM 20030 / JCM 1464 / CCM 169 / CCUG 5858 / IAM 1056 / NBRC 3333 / NCIMB 9278 / NCTC 2665 / VKM Ac-2230) (Micrococcus lysodeikticus), this protein is Enolase.